Reading from the N-terminus, the 499-residue chain is MTVATGDPADEAAALPGHPQDTYDPEADHECCERVVINISGLRFETQLKTLAQFPETLLGDPKKRMRYFDPLRNEYFFDRNRPSFDAILYYYQSGGRLRRPVNVPLDIFSEEIRFYELGEEAMEMFREDEGYIKEEERPLPENEFQRQVWLLFEYPESSGPARIIAIVSVMVILISIVSFCLETLPIFRDENEDMHGSGVTFHTYSNSTIGYQQSTSFTDPFFIVETLCIIWFSFEFLVRFFACPSKAGFFTNIMNIIDIVAIIPYFITLGTELAEKPEDAQQGQQAMSLAILRVIRLVRVFRIFKLSRHSKGLQILGQTLKASMRELGLLIFFLFIGVILFSSAVYFAEADERESQFPSIPDAFWWAVVSMTTVGYGDMVPTTIGGKIVGSLCAIAGVLTIALPVPVIVSNFNYFYHRETEGEEQAQYLQVTSCPKIPSSPDLKKSRSASTISKSDYMEIQEGVNNSNEDFREENLKTANCTLANTNYVNITKMLTDV.

The tract at residues Met-1–Glu-26 is disordered. Positions Met-1–Met-125 are tetramerization domain. Topologically, residues Met-1–Gly-160 are cytoplasmic. The helical transmembrane segment at Pro-161–Leu-182 threads the bilayer. The Extracellular segment spans residues Glu-183 to Pro-221. Residue Asn-207 is glycosylated (N-linked (GlcNAc...) asparagine). A helical membrane pass occupies residues Phe-222 to Ala-243. Cys-244 carries the S-palmitoyl cysteine lipid modification. Residues Cys-244–Ile-254 are Cytoplasmic-facing. A helical membrane pass occupies residues Met-255 to Ala-275. Residues Glu-276 to Ser-289 are Extracellular-facing. A helical; Voltage-sensor transmembrane segment spans residues Leu-290–His-310. Over Ser-311 to Met-325 the chain is Cytoplasmic. An S4-S5 linker region spans residues Lys-312–Met-325. The helical transmembrane segment at Arg-326–Tyr-347 threads the bilayer. At Phe-348–Ile-361 the chain is on the extracellular side. The segment at residues Pro-362–Thr-373 is an intramembrane region (helical). The Selectivity filter signature appears at Thr-374–Asp-379. Residues Thr-374–Val-381 lie within the membrane without spanning it. The Extracellular segment spans residues Pro-382–Lys-388. Residues Ile-389 to Tyr-417 traverse the membrane as a helical segment. Over His-418–Val-499 the chain is Cytoplasmic. Phosphotyrosine is present on Tyr-429. 4 positions are modified to phosphoserine: Ser-434, Ser-440, Ser-441, and Ser-449. Tyr-458 is modified (phosphotyrosine). Phosphoserine is present on Ser-468. Residues Thr-497–Val-499 carry the PDZ-binding motif.

It belongs to the potassium channel family. A (Shaker) (TC 1.A.1.2) subfamily. Kv1.2/KCNA2 sub-subfamily. As to quaternary structure, homotetramer and heterotetramer with other channel-forming alpha subunits, such as KCNA1, KCNA4, KCNA5, KCNA6 and KCNA7. Channel activity is regulated by interaction with the beta subunits, including KCNAB1 and KCNAB2. Identified in a complex with KCNA1 and KCNAB2. Identified in a complex with KCNA5 and KCNAB1. Identified in a complex with KCNA4 and FYN. Interacts with the beta subunit KCNAB1. Interacts with PTK2B. Interacts (via C-terminus) with CTTN. Interacts (via N-terminal cytoplasmic domain) with RHOA (GTP-bound form); this regulates channel activity by reducing location at the cell surface in response to CHRM1 activation. Interacts with DRD2. Interacts with SIGMAR1; cocaine consumption leads to increased interaction. Interacts with ADAM22. Interacts (via C-terminus) with the PDZ domains of DLG1, DLG2 and DLG4. Interacts with CNTNAP2. Interacts with ADAM11. Interacts with LYNX1. Phosphorylated on tyrosine residues; phosphorylation increases in response to ischemia. Phosphorylated on tyrosine residues by activated PTK2B/PYK2. Phosphorylation on tyrosine residues suppresses ion channel activity. Phosphorylated on tyrosine residues in response to CHRM1 activation; this abolishes interaction with CTTN. This is probably due to endocytosis of the phosphorylated channel subunits. Phosphorylated on serine residues in response to increased cAMP levels; phosphorylation is apparently not catalyzed by PKA. Post-translationally, N-glycosylated, with complex, sialylated N-glycans. In terms of tissue distribution, detected in brain cortex. Detected in peroneal nerve in the juxtaparanodal regions of the node of Ranvier; expression is decreased in patients with diabetes mellitus that suffer from axonal neuropathy. Detected in paranodal and juxtanodal zones in myelinated spinal cord (at protein level).

The protein resides in the cell membrane. It localises to the membrane. The protein localises to the cell projection. It is found in the axon. Its subcellular location is the synapse. The protein resides in the endoplasmic reticulum membrane. It localises to the lamellipodium membrane. The protein localises to the synaptosome. It is found in the presynaptic cell membrane. Its subcellular location is the dendrite. The protein resides in the cell junction. It localises to the paranodal septate junction. The enzyme catalyses K(+)(in) = K(+)(out). Inhibited by 4-aminopyridine (4-AP) and charybdotoxin (CTX), but not by tetraethylammonium (TEA). Inhibited by dendrotoxin (DTX). Inhibited by tityustoxin-K alpha (TsTX-Kalpha), a toxin that is highly specific for KCNA2. Inhibited by maurotoxin. Inhibited by kappaM conotoxins kappaM-RIIIJ and kappaM-RIIIK; kappaM-RIIIJ has much higher affinity for channels containing KCNA2 than kappaM-RIIIK, with the exception of heterodimers formed by KCNA2 and KCNA7 where the opposite is true. Its function is as follows. Voltage-gated potassium channel that mediates transmembrane potassium transport in excitable membranes, primarily in the brain and the central nervous system, but also in the cardiovascular system. Prevents aberrant action potential firing and regulates neuronal output. Forms tetrameric potassium-selective channels through which potassium ions pass in accordance with their electrochemical gradient. The channel alternates between opened and closed conformations in response to the voltage difference across the membrane. Can form functional homotetrameric channels and heterotetrameric channels that contain variable proportions of KCNA1, KCNA2, KCNA4, KCNA5, KCNA6, KCNA7, and possibly other family members as well; channel properties depend on the type of alpha subunits that are part of the channel. Channel properties are modulated by cytoplasmic beta subunits that regulate the subcellular location of the alpha subunits and promote rapid inactivation of delayed rectifier potassium channels. In vivo, membranes probably contain a mixture of heteromeric potassium channel complexes, making it difficult to assign currents observed in intact tissues to any particular potassium channel family member. Homotetrameric KCNA2 forms a delayed-rectifier potassium channel that opens in response to membrane depolarization, followed by slow spontaneous channel closure. In contrast, a heteromultimer formed by KCNA2 and KCNA4 shows rapid inactivation. Regulates neuronal excitability and plays a role as pacemaker in the regulation of neuronal action potentials. KCNA2-containing channels play a presynaptic role and prevent hyperexcitability and aberrant action potential firing. Response to toxins that are selective for KCNA2-containing potassium channels suggests that in Purkinje cells, dendritic subthreshold KCNA2-containing potassium channels prevent random spontaneous calcium spikes, suppressing dendritic hyperexcitability without hindering the generation of somatic action potentials, and thereby play an important role in motor coordination. Plays a role in the induction of long-term potentiation of neuron excitability in the CA3 layer of the hippocampus. May function as down-stream effector for G protein-coupled receptors and inhibit GABAergic inputs to basolateral amygdala neurons. May contribute to the regulation of neurotransmitter release, such as gamma-aminobutyric acid (GABA). Contributes to the regulation of the axonal release of the neurotransmitter dopamine. Reduced KCNA2 expression plays a role in the perception of neuropathic pain after peripheral nerve injury, but not acute pain. Plays a role in the regulation of the time spent in non-rapid eye movement (NREM) sleep. This Homo sapiens (Human) protein is Potassium voltage-gated channel subfamily A member 2 (KCNA2).